The primary structure comprises 603 residues: Terpenoid synthase 25 (603 aa).

Mg(2+) contacts are provided by aspartate 356, aspartate 360, asparagine 500, threonine 504, and glutamate 508. The DDXXD motif signature appears at 356–360 (DDTCD).

It belongs to the terpene synthase family. Tpsa subfamily. The cofactor is Mg(2+). Mn(2+) is required as a cofactor. In terms of tissue distribution, predominantly expressed in roots but also in flowers.

The protein localises to the cytoplasm. It participates in secondary metabolite biosynthesis; terpenoid biosynthesis. In terms of biological role, involved in terpene biosynthesis in roots. Possesses sesquiterpene (C15) synthase activity in vitro. Does not seem to be involved in diterpene (C20) biosynthesis. The polypeptide is Terpenoid synthase 25 (Arabidopsis thaliana (Mouse-ear cress)).